Consider the following 452-residue polypeptide: Pup--protein ligase (452 aa).

Glu-9 is a Mg(2+) binding site. Arg-53 serves as a coordination point for ATP. Mg(2+) is bound at residue Tyr-55. Asp-57 (proton acceptor) is an active-site residue. Glu-63 lines the Mg(2+) pocket. ATP is bound by residues Thr-66 and Trp-419.

This sequence belongs to the Pup ligase/Pup deamidase family. Pup-conjugating enzyme subfamily.

It catalyses the reaction ATP + [prokaryotic ubiquitin-like protein]-L-glutamate + [protein]-L-lysine = ADP + phosphate + N(6)-([prokaryotic ubiquitin-like protein]-gamma-L-glutamyl)-[protein]-L-lysine.. The protein operates within protein degradation; proteasomal Pup-dependent pathway. Its pathway is protein modification; protein pupylation. Catalyzes the covalent attachment of the prokaryotic ubiquitin-like protein modifier Pup to the proteasomal substrate proteins, thereby targeting them for proteasomal degradation. This tagging system is termed pupylation. The ligation reaction involves the side-chain carboxylate of the C-terminal glutamate of Pup and the side-chain amino group of a substrate lysine. The chain is Pup--protein ligase from Actinosynnema mirum (strain ATCC 29888 / DSM 43827 / JCM 3225 / NBRC 14064 / NCIMB 13271 / NRRL B-12336 / IMRU 3971 / 101).